Here is a 103-residue protein sequence, read N- to C-terminus: Large ribosomal subunit protein bL21 (103 aa).

Belongs to the bacterial ribosomal protein bL21 family. As to quaternary structure, part of the 50S ribosomal subunit. Contacts protein L20.

This protein binds to 23S rRNA in the presence of protein L20. The chain is Large ribosomal subunit protein bL21 from Photobacterium profundum (strain SS9).